The following is a 295-amino-acid chain: Acetylglutamate kinase (295 aa).

Substrate contacts are provided by residues 70-71, arginine 92, and asparagine 191; that span reads GG.

The protein belongs to the acetylglutamate kinase family. ArgB subfamily.

It is found in the cytoplasm. It catalyses the reaction N-acetyl-L-glutamate + ATP = N-acetyl-L-glutamyl 5-phosphate + ADP. The protein operates within amino-acid biosynthesis; L-arginine biosynthesis; N(2)-acetyl-L-ornithine from L-glutamate: step 2/4. In terms of biological role, catalyzes the ATP-dependent phosphorylation of N-acetyl-L-glutamate. The polypeptide is Acetylglutamate kinase (Mycolicibacterium paratuberculosis (strain ATCC BAA-968 / K-10) (Mycobacterium paratuberculosis)).